We begin with the raw amino-acid sequence, 400 residues long: U-box domain-containing protein 37 (400 aa).

A coiled-coil region spans residues 229–298; it reads KEWESAYLEE…RKAKEERDLL (70 aa). The 75-residue stretch at 324-398 folds into the U-box domain; that stretch reads EAPQYFICPI…QEWLHASSSF (75 aa).

The enzyme catalyses S-ubiquitinyl-[E2 ubiquitin-conjugating enzyme]-L-cysteine + [acceptor protein]-L-lysine = [E2 ubiquitin-conjugating enzyme]-L-cysteine + N(6)-ubiquitinyl-[acceptor protein]-L-lysine.. It functions in the pathway protein modification; protein ubiquitination. Functionally, functions as an E3 ubiquitin ligase. This is U-box domain-containing protein 37 (PUB37) from Arabidopsis thaliana (Mouse-ear cress).